A 179-amino-acid polypeptide reads, in one-letter code: ATP-dependent protease subunit HslV (179 aa).

The active site involves T6. 3 residues coordinate Na(+): S164, C167, and T170.

This sequence belongs to the peptidase T1B family. HslV subfamily. In terms of assembly, a double ring-shaped homohexamer of HslV is capped on each side by a ring-shaped HslU homohexamer. The assembly of the HslU/HslV complex is dependent on binding of ATP.

It localises to the cytoplasm. It carries out the reaction ATP-dependent cleavage of peptide bonds with broad specificity.. Its activity is regulated as follows. Allosterically activated by HslU binding. Its function is as follows. Protease subunit of a proteasome-like degradation complex believed to be a general protein degrading machinery. The chain is ATP-dependent protease subunit HslV from Listeria innocua serovar 6a (strain ATCC BAA-680 / CLIP 11262).